We begin with the raw amino-acid sequence, 158 residues long: Ankyrin repeat domain-containing protein 37 (158 aa).

3 ANK repeats span residues 1–25 (MLLL…SVNA), 30–59 (CKQS…DLNQ), and 63–92 (LGEA…QIDL). Positions 129–149 (EHPDRNDCVAVLRQKRSLGSV) match the Nuclear localization signal motif.

Post-translationally, ubiquitinated by the CRL2(FEM1B) complex, leading to its degradation. Mainly expressed in testis, small intestine, colon, blood leukocytes and in pancreatic adenocarcinoma cells.

It localises to the nucleus. Its subcellular location is the cytoplasm. In Homo sapiens (Human), this protein is Ankyrin repeat domain-containing protein 37.